The sequence spans 282 residues: Nudix hydrolase 7 (282 aa).

Residues 101-233 (SHVVGAGALV…KNEMFKFMAN (133 aa)) enclose the Nudix hydrolase domain. The Nudix box signature appears at 139 to 160 (GVINEGEDIWTGVAREVEEETG). Positions 154 and 158 each coordinate Mg(2+).

It belongs to the Nudix hydrolase family. Homodimer. Interacts with RACK1A, GG1 and GG2. Mg(2+) serves as cofactor. Expressed in stems, leaves, roots, flowers and siliques.

The protein localises to the nucleus. It is found in the cytoplasm. Its subcellular location is the cell membrane. It carries out the reaction ADP-D-ribose + H2O = D-ribose 5-phosphate + AMP + 2 H(+). It catalyses the reaction NAD(+) + H2O = beta-nicotinamide D-ribonucleotide + AMP + 2 H(+). The enzyme catalyses NADH + H2O = reduced beta-nicotinamide D-ribonucleotide + AMP + 2 H(+). With respect to regulation, not inhibited by fluoride. Functionally, mediates the hydrolysis of some nucleoside diphosphate derivatives. Can use both NADH and ADP-ribose as substrates, but not 8-oxo-dGTP, cyclic ADP-ribose, GDP-mannose, UDP-glucose, ATP, or GTP. Exerts negative control of EDS1 signaling. The protein is Nudix hydrolase 7 (NUDT7) of Arabidopsis thaliana (Mouse-ear cress).